The primary structure comprises 173 residues: Ribulose bisphosphate carboxylase small subunit, chloroplastic 2 (173 aa).

A chloroplast-targeting transit peptide spans 1-33 (VVLSKECAKPLATPKVTLNKRGFATTIATKNRE).

Belongs to the RuBisCO small chain family. As to quaternary structure, heterohexadecamer of 8 large and 8 small subunits.

It localises to the plastid. Its subcellular location is the chloroplast. RuBisCO catalyzes two reactions: the carboxylation of D-ribulose 1,5-bisphosphate, the primary event in carbon dioxide fixation, as well as the oxidative fragmentation of the pentose substrate. Both reactions occur simultaneously and in competition at the same active site. Although the small subunit is not catalytic it is essential for maximal activity. This is Ribulose bisphosphate carboxylase small subunit, chloroplastic 2 from Acetabularia acetabulum (Mermaid's wine glass).